The following is a 126-amino-acid chain: Large ribosomal subunit protein bL12 (126 aa).

This sequence belongs to the bacterial ribosomal protein bL12 family. Homodimer. Part of the ribosomal stalk of the 50S ribosomal subunit. Forms a multimeric L10(L12)X complex, where L10 forms an elongated spine to which 2 to 4 L12 dimers bind in a sequential fashion. Binds GTP-bound translation factors.

Functionally, forms part of the ribosomal stalk which helps the ribosome interact with GTP-bound translation factors. Is thus essential for accurate translation. The polypeptide is Large ribosomal subunit protein bL12 (Methylobacterium sp. (strain 4-46)).